We begin with the raw amino-acid sequence, 316 residues long: Peroxidase 31 (316 aa).

An N-terminal signal peptide occupies residues 1-19 (MASLKSLFLLFLFFFTAQS). Cystine bridges form between Cys30–Cys111, Cys63–Cys68, Cys117–Cys312, and Cys196–Cys222. The active-site Proton acceptor is His61. Ca(2+) contacts are provided by Asp62, Gly67, Asp69, and Ser71. Pro159 lines the substrate pocket. His189 is a binding site for heme b. Ser190 is a binding site for Ca(2+). Residue Asn206 is glycosylated (N-linked (GlcNAc...) asparagine). Residues Asp236, Thr239, and Asp244 each coordinate Ca(2+).

Belongs to the peroxidase family. Classical plant (class III) peroxidase subfamily. Heme b is required as a cofactor. Ca(2+) serves as cofactor.

The protein localises to the secreted. It catalyses the reaction 2 a phenolic donor + H2O2 = 2 a phenolic radical donor + 2 H2O. In terms of biological role, removal of H(2)O(2), oxidation of toxic reductants, biosynthesis and degradation of lignin, suberization, auxin catabolism, response to environmental stresses such as wounding, pathogen attack and oxidative stress. These functions might be dependent on each isozyme/isoform in each plant tissue. In Arabidopsis thaliana (Mouse-ear cress), this protein is Peroxidase 31 (PER31).